Here is a 91-residue protein sequence, read N- to C-terminus: Small ribosomal subunit protein uS19 (91 aa).

Belongs to the universal ribosomal protein uS19 family.

In terms of biological role, protein S19 forms a complex with S13 that binds strongly to the 16S ribosomal RNA. In Prochlorococcus marinus (strain MIT 9515), this protein is Small ribosomal subunit protein uS19.